The primary structure comprises 142 residues: Protein CPn_0742/CP_0003/CPj0742/CpB0770 (142 aa).

The disordered stretch occupies residues leucine 115–leucine 142. Positions proline 124–leucine 142 are enriched in basic residues.

This sequence belongs to the chlamydial CPn_0742/CT_635/TC_0003 family.

This Chlamydia pneumoniae (Chlamydophila pneumoniae) protein is Protein CPn_0742/CP_0003/CPj0742/CpB0770.